The following is a 163-amino-acid chain: Large ribosomal subunit protein uL10 (163 aa).

It belongs to the universal ribosomal protein uL10 family. Part of the ribosomal stalk of the 50S ribosomal subunit. The N-terminus interacts with L11 and the large rRNA to form the base of the stalk. The C-terminus forms an elongated spine to which L12 dimers bind in a sequential fashion forming a multimeric L10(L12)X complex.

Functionally, forms part of the ribosomal stalk, playing a central role in the interaction of the ribosome with GTP-bound translation factors. This chain is Large ribosomal subunit protein uL10, found in Glaesserella parasuis serovar 5 (strain SH0165) (Haemophilus parasuis).